Here is a 257-residue protein sequence, read N- to C-terminus: tRNA dimethylallyltransferase (257 aa).

15-22 (GPTASGKS) lines the ATP pocket. 17-22 (TASGKS) serves as a coordination point for substrate.

Belongs to the IPP transferase family. Monomer. It depends on Mg(2+) as a cofactor.

It carries out the reaction adenosine(37) in tRNA + dimethylallyl diphosphate = N(6)-dimethylallyladenosine(37) in tRNA + diphosphate. Its function is as follows. Catalyzes the transfer of a dimethylallyl group onto the adenine at position 37 in tRNAs that read codons beginning with uridine, leading to the formation of N6-(dimethylallyl)adenosine (i(6)A). In Oenococcus oeni (strain ATCC BAA-331 / PSU-1), this protein is tRNA dimethylallyltransferase.